Reading from the N-terminus, the 203-residue chain is Imidazoleglycerol-phosphate dehydratase (203 aa).

The protein belongs to the imidazoleglycerol-phosphate dehydratase family.

Its subcellular location is the cytoplasm. It catalyses the reaction D-erythro-1-(imidazol-4-yl)glycerol 3-phosphate = 3-(imidazol-4-yl)-2-oxopropyl phosphate + H2O. The protein operates within amino-acid biosynthesis; L-histidine biosynthesis; L-histidine from 5-phospho-alpha-D-ribose 1-diphosphate: step 6/9. The polypeptide is Imidazoleglycerol-phosphate dehydratase (Salinispora arenicola (strain CNS-205)).